The primary structure comprises 410 residues: Dipeptidase 1 (410 aa).

The first 16 residues, 1 to 16 (MVIIWWFWSLLAICAS), serve as a signal peptide directing secretion. Residues histidine 36 and aspartate 38 each contribute to the Zn(2+) site. A disulfide bridge connects residues cysteine 87 and cysteine 170. Asparagine 121 carries N-linked (GlcNAc...) asparagine glycosylation. Glutamate 141 is a binding site for Zn(2+). Position 168 (histidine 168) interacts with substrate. Positions 214 and 235 each coordinate Zn(2+). Cysteine 242 and cysteine 274 are disulfide-bonded. Arginine 246 contacts substrate. Asparagine 258 is a glycosylation site (N-linked (GlcNAc...) asparagine). Aspartate 304 serves as a coordination point for substrate. Asparagine 332 carries N-linked (GlcNAc...) asparagine glycosylation. The GPI-anchor amidated serine moiety is linked to residue serine 384. Positions 385–410 (QAHSIHLQTGALVASLASLLFRLHLL) are cleaved as a propeptide — removed in mature form.

This sequence belongs to the metallo-dependent hydrolases superfamily. Peptidase M19 family. Homodimer; disulfide-linked. The cofactor is Zn(2+). As to expression, expressed in heart, lung, skeletal muscle, kidney, liver, and testis. Not detected in brain and spleen.

Its subcellular location is the apical cell membrane. It is found in the cell projection. The protein resides in the microvillus membrane. It catalyses the reaction an L-aminoacyl-L-amino acid + H2O = 2 an L-alpha-amino acid. The enzyme catalyses leukotriene D4 + H2O = leukotriene E4 + glycine. The catalysed reaction is L-cystine-bis-glycine + 2 H2O = L-cystine + 2 glycine. It carries out the reaction a beta-lactam + H2O = a substituted beta-amino acid. It catalyses the reaction glycyldehydrophenylalanine + H2O = 2,3-didehydrophenylalanine + glycine. With respect to regulation, inhibited by L-penicillamine. Inhibited by cilastatin. Its function is as follows. Hydrolyzes a wide range of dipeptides including the conversion of leukotriene D4 to leukotriene E4. Hydrolyzes cystinyl-bis-glycine (cys-bis-gly) formed during glutathione degradation. Also possesses beta lactamase activity and hydrolytically inactivates beta-lactam antibiotics. Functionally, independently of its dipeptidase activity, acts as an adhesion receptor for neutrophil recruitment from bloodstream into inflamed lungs and liver. This chain is Dipeptidase 1 (Dpep1), found in Mus musculus (Mouse).